Here is a 541-residue protein sequence, read N- to C-terminus: Membrane protein insertase YidC (541 aa).

6 helical membrane-spanning segments follow: residues 6-26, 325-345, 349-369, 420-440, 457-477, and 500-520; these read NILL…WQAD, LVVD…LLMF, FVGN…GLLF, GGCL…WVLL, LSVQ…MFVM, and VIFT…WLVG.

It belongs to the OXA1/ALB3/YidC family. Type 1 subfamily. As to quaternary structure, interacts with the Sec translocase complex via SecD. Specifically interacts with transmembrane segments of nascent integral membrane proteins during membrane integration.

The protein resides in the cell inner membrane. In terms of biological role, required for the insertion and/or proper folding and/or complex formation of integral membrane proteins into the membrane. Involved in integration of membrane proteins that insert both dependently and independently of the Sec translocase complex, as well as at least some lipoproteins. Aids folding of multispanning membrane proteins. The protein is Membrane protein insertase YidC of Shewanella baltica (strain OS195).